The primary structure comprises 432 residues: Serine--tRNA ligase (432 aa).

238 to 240 is an L-serine binding site; that stretch reads TAE. An ATP-binding site is contributed by 269–271; it reads RSE. E292 contacts L-serine. Position 357–360 (357–360) interacts with ATP; the sequence is EISS. Residue S393 participates in L-serine binding.

It belongs to the class-II aminoacyl-tRNA synthetase family. Type-1 seryl-tRNA synthetase subfamily. In terms of assembly, homodimer. The tRNA molecule binds across the dimer.

It localises to the cytoplasm. The catalysed reaction is tRNA(Ser) + L-serine + ATP = L-seryl-tRNA(Ser) + AMP + diphosphate + H(+). It catalyses the reaction tRNA(Sec) + L-serine + ATP = L-seryl-tRNA(Sec) + AMP + diphosphate + H(+). It participates in aminoacyl-tRNA biosynthesis; selenocysteinyl-tRNA(Sec) biosynthesis; L-seryl-tRNA(Sec) from L-serine and tRNA(Sec): step 1/1. Its function is as follows. Catalyzes the attachment of serine to tRNA(Ser). Is also able to aminoacylate tRNA(Sec) with serine, to form the misacylated tRNA L-seryl-tRNA(Sec), which will be further converted into selenocysteinyl-tRNA(Sec). The protein is Serine--tRNA ligase of Hyphomonas neptunium (strain ATCC 15444).